The sequence spans 664 residues: DNA mismatch repair protein MutL (664 aa).

The interval arginine 382–glutamine 447 is disordered. Residues arginine 427–glutamate 436 are compositionally biased toward polar residues.

This sequence belongs to the DNA mismatch repair MutL/HexB family.

Functionally, this protein is involved in the repair of mismatches in DNA. It is required for dam-dependent methyl-directed DNA mismatch repair. May act as a 'molecular matchmaker', a protein that promotes the formation of a stable complex between two or more DNA-binding proteins in an ATP-dependent manner without itself being part of a final effector complex. This Vibrio vulnificus (strain CMCP6) protein is DNA mismatch repair protein MutL.